A 225-amino-acid polypeptide reads, in one-letter code: Glutathione S-transferase U3 (225 aa).

One can recognise a GST N-terminal domain in the interval 6-86 (EGVKLIGSWA…YIDQTWTNNP (81 aa)). Glutathione-binding positions include 16–17 (SP), 43–44 (VK), 57–58 (KV), and 70–71 (ES). The 128-residue stretch at 91–218 (SPYDKAMARF…EKHIEHMMKI (128 aa)) folds into the GST C-terminal domain. T152 bears the Phosphothreonine mark.

The protein belongs to the GST superfamily. Tau family.

The protein resides in the cytoplasm. Its subcellular location is the cytosol. It catalyses the reaction RX + glutathione = an S-substituted glutathione + a halide anion + H(+). Its function is as follows. May be involved in the conjugation of reduced glutathione to a wide number of exogenous and endogenous hydrophobic electrophiles and have a detoxification role against certain herbicides. This Arabidopsis thaliana (Mouse-ear cress) protein is Glutathione S-transferase U3 (GSTU3).